An 80-amino-acid polypeptide reads, in one-letter code: Cytochrome c oxidase subunit 7A1, mitochondrial (80 aa).

A mitochondrion-targeting transit peptide spans 1–21 (MLAPRVSQALIRSFSSTARNR). The Mitochondrial matrix segment spans residues 22 to 46 (LKNRVPEKQKLFQEDNGIPVYLKGG). Residues 47–75 (VVDHILYRVTMGLCLGGTAYGVYCLAWAS) form a helical membrane-spanning segment. At 76–80 (FPRNK) the chain is on the mitochondrial intermembrane side.

The protein belongs to the cytochrome c oxidase VIIa family. In terms of assembly, component of the complex IV (CIV, cytochrome c oxidase), a multisubunit enzyme composed of 14 subunits. The complex is composed of a catalytic core of 3 subunits MT-CO1, MT-CO2 and MT-CO3, encoded in the mitochondrial DNA, and 11 supernumerary subunits COX4I1 (or COX4I2), COX5A, COX5B, COX6A2 (or COX6A1), COX6B1 (or COX6B2), COX6C, COX7A1 (or COX7A2), COX7B, COX7C, COX8B and NDUFA4, which are encoded in the nuclear genome. The complex exists as a monomer or a dimer and forms supercomplexes (SCs) in the inner mitochondrial membrane with NADH-ubiquinone oxidoreductase (complex I, CI) and ubiquinol-cytochrome c oxidoreductase (cytochrome b-c1 complex, complex III, CIII), resulting in different assemblies (supercomplex SCI(1)III(2)IV(1) and megacomplex MCI(2)III(2)IV(2)).

Its subcellular location is the mitochondrion inner membrane. It functions in the pathway energy metabolism; oxidative phosphorylation. In terms of biological role, component of the mitochondrial respiratory complex IV (CIV, also named cytochrome c oxidase complex), the last enzyme in the mitochondrial electron transport chain which drives oxidative phosphorylation. The CIV complex is the component of the respiratory chain that catalyzes the reduction of oxygen to water. Acts as an assembly factor that specifically drives the homodimerization of CIV complexes, mediating the formation of mitochondrial respiratory supercomplexes (respirasomes) containing two CIV: supercomplxes with two molecules of CIV show improved activity. Despite being highly expressed in brown adipose tissue, not required for thermogenesis. This is Cytochrome c oxidase subunit 7A1, mitochondrial (COX7A1) from Saimiri sciureus (Common squirrel monkey).